Consider the following 56-residue polypeptide: Large ribosomal subunit protein bL33 (56 aa).

The span at M1–L12 shows a compositional bias: basic and acidic residues. Residues M1–K28 are disordered. Residues T15–S25 show a composition bias toward polar residues.

It belongs to the bacterial ribosomal protein bL33 family.

In Albidiferax ferrireducens (strain ATCC BAA-621 / DSM 15236 / T118) (Rhodoferax ferrireducens), this protein is Large ribosomal subunit protein bL33.